We begin with the raw amino-acid sequence, 289 residues long: Ubiquinone biosynthesis O-methyltransferase (289 aa).

Arginine 36 lines the S-adenosyl-L-methionine pocket. The 49-residue stretch at 50–98 (RHLSKLTYREELVGNMQHSTAAYALVREDASSRLTHKLPLEAEFEKMSN) folds into the RPE1 insert domain. Residues glycine 109, aspartate 130, and leucine 172 each coordinate S-adenosyl-L-methionine.

It belongs to the methyltransferase superfamily. UbiG/COQ3 family.

It carries out the reaction a 3-demethylubiquinol + S-adenosyl-L-methionine = a ubiquinol + S-adenosyl-L-homocysteine + H(+). The catalysed reaction is a 3-(all-trans-polyprenyl)benzene-1,2-diol + S-adenosyl-L-methionine = a 2-methoxy-6-(all-trans-polyprenyl)phenol + S-adenosyl-L-homocysteine + H(+). Its pathway is cofactor biosynthesis; ubiquinone biosynthesis. In terms of biological role, O-methyltransferase that catalyzes the 2 O-methylation steps in the ubiquinone biosynthetic pathway. This is Ubiquinone biosynthesis O-methyltransferase from Rickettsia conorii (strain ATCC VR-613 / Malish 7).